We begin with the raw amino-acid sequence, 540 residues long: Probable LRR receptor-like serine/threonine-protein kinase RPK1 (540 aa).

The signal sequence occupies residues 1–19 (MKLLGLVFLLFNLFMFSFS). The Extracellular segment spans residues 20–198 (RKLLTESGGG…PGKSGLYPIE (179 aa)). LRR repeat units lie at residues 118 to 142 (LSEIRVLSLSFNDLRGEIPKEIWGL) and 144 to 169 (KLEILDLKGNNFIGGIRVVDNVVLRK). A helical transmembrane segment spans residues 199 to 219 (IASIVSASVIVFVLLVLVILF). Residues 220–540 (IYTRKWKRNS…LLKRIQPSRL (321 aa)) are Cytoplasmic-facing. Residues T250 and T258 each carry the phosphothreonine modification. The region spanning 261–535 (FSNSNCIGHG…KQAVRLLKRI (275 aa)) is the Protein kinase domain. ATP is bound by residues 267–275 (IGHGGFGST) and K289. A phosphotyrosine mark is found at Y334 and Y372. The active-site Proton acceptor is D385. Residue Y427 is modified to Phosphotyrosine. T435 carries the phosphothreonine modification.

Belongs to the protein kinase superfamily. Ser/Thr protein kinase family. In terms of tissue distribution, expressed in roots, stems, leaves, and flowers.

Its subcellular location is the cell membrane. The catalysed reaction is L-seryl-[protein] + ATP = O-phospho-L-seryl-[protein] + ADP + H(+). It carries out the reaction L-threonyl-[protein] + ATP = O-phospho-L-threonyl-[protein] + ADP + H(+). Functionally, involved in the main abscisic acid-mediated (ABA) signaling pathway and in early ABA perception. Together with RPK2, required for pattern formation along the radial axis (e.g. the apical embryonic domain cell types that generate cotyledon primordia), and the apical-basal axis (e.g. differentiation of the basal pole during early embryogenesis). The polypeptide is Probable LRR receptor-like serine/threonine-protein kinase RPK1 (RPK1) (Arabidopsis thaliana (Mouse-ear cress)).